The chain runs to 386 residues: NADH kinase pos5, mitochondrial (386 aa).

The transit peptide at 1-42 (MIRAANGFRISVRNTAVCLAPNFRQLKGFSIINLGSLQYFRY) directs the protein to the mitochondrion.

This sequence belongs to the NAD kinase family.

It localises to the mitochondrion. The enzyme catalyses NADH + ATP = ADP + NADPH + H(+). In terms of biological role, phosphorylates both NADH and NAD(+), with a preference for NADH. Anti-oxidant factor and key source of the cellular reductant NADPH. The polypeptide is NADH kinase pos5, mitochondrial (pos5) (Schizosaccharomyces pombe (strain 972 / ATCC 24843) (Fission yeast)).